A 378-amino-acid chain; its full sequence is Protein RecA (378 aa).

79–86 lines the ATP pocket; that stretch reads GPESSGKT.

The protein belongs to the RecA family.

It is found in the cytoplasm. Can catalyze the hydrolysis of ATP in the presence of single-stranded DNA, the ATP-dependent uptake of single-stranded DNA by duplex DNA, and the ATP-dependent hybridization of homologous single-stranded DNAs. It interacts with LexA causing its activation and leading to its autocatalytic cleavage. The sequence is that of Protein RecA from Streptococcus pyogenes serotype M49 (strain NZ131).